The chain runs to 184 residues: uncharacterized protein (184 aa).

This is an uncharacterized protein from Chlamydia pneumoniae (Chlamydophila pneumoniae).